The primary structure comprises 1062 residues: Translation initiation factor IF-2 (1062 aa).

A disordered region spans residues 34 to 463 (SASSTVEAPV…RMGAMVPRGN (430 aa)). Residues 76–121 (PTPPSRPGLAPRPGPRPVPGRPGPLGRPGPATPAPSPSPASPPLPA) show a composition bias toward pro residues. Residues 122–153 (SPVQASPVQASPVQASPTSAPAAPRPAAASAV) are compositionally biased toward low complexity. The segment covering 154–178 (PAPPMPSVPSAPSGPRPGPNAPRPG) has biased composition (pro residues). Over residues 198 to 214 (TAGGPTAGGPTAGGPTA) the composition is skewed to gly residues. The span at 294-305 (RPTPGGMPPRPG) shows a compositional bias: pro residues. Gly residues-rich tracts occupy residues 307–324 (PRSG…GTGG) and 344–430 (PGGG…GGRG). Residues 431-442 (RPGRQRKSKRAK) show a composition bias toward basic residues. A tr-type G domain is found at 555-727 (SRPPVVTVMG…IVLTADASLD (173 aa)). Residues 564–571 (GHVDHGKT) are G1. Residue 564-571 (GHVDHGKT) coordinates GTP. The interval 589–593 (GITQH) is G2. The segment at 614 to 617 (DTPG) is G3. GTP contacts are provided by residues 614 to 618 (DTPGH) and 668 to 671 (NKVD). The interval 668–671 (NKVD) is G4. A G5 region spans residues 704–706 (SAR).

This sequence belongs to the TRAFAC class translation factor GTPase superfamily. Classic translation factor GTPase family. IF-2 subfamily.

It is found in the cytoplasm. In terms of biological role, one of the essential components for the initiation of protein synthesis. Protects formylmethionyl-tRNA from spontaneous hydrolysis and promotes its binding to the 30S ribosomal subunits. Also involved in the hydrolysis of GTP during the formation of the 70S ribosomal complex. This is Translation initiation factor IF-2 from Frankia casuarinae (strain DSM 45818 / CECT 9043 / HFP020203 / CcI3).